A 441-amino-acid chain; its full sequence is Transcriptional regulatory protein ZraR (441 aa).

Positions 7-121 constitute a Response regulatory domain; the sequence is DILVVDDDIS…NLQATLEKAL (115 aa). Position 56 is a 4-aspartylphosphate (D56). The Sigma-54 factor interaction domain maps to 141–370; sequence MVGKSPAMQH…LENAVERAVV (230 aa). ATP contacts are provided by G172, T173, R329, and R359. The segment at residues 421–440 is a DNA-binding region (H-T-H motif); the sequence is KTEAARQLGITRKTLLAKLS.

Phosphorylated by ZraS.

It localises to the cytoplasm. With respect to regulation, activity of the ZraS/ZraR two-component system is repressed by the zinc-bound form of ZraP, which probably interacts with the periplasmic region of ZraS. Functionally, part of the Zra signaling pathway, an envelope stress response (ESR) system composed of the periplasmic accessory protein ZraP, the histidine kinase ZraS and the transcriptional regulator ZraR. The ZraPSR system contributes to antibiotic resistance and is important for membrane integrity in the presence of membrane-targeting biocides. ZraR is a member of the two-component regulatory system ZraS/ZraR. When activated by ZraS, acts in conjunction with sigma-54 to regulate the expression of zraP in the presence of high Zn(2+) or Pb(2+) concentrations. Also positively autoregulates the expression of the zraSR operon. The protein is Transcriptional regulatory protein ZraR (zraR) of Escherichia coli O157:H7.